Consider the following 101-residue polypeptide: Small ribosomal subunit protein uS14 (101 aa).

This sequence belongs to the universal ribosomal protein uS14 family. As to quaternary structure, part of the 30S ribosomal subunit. Contacts proteins S3 and S10.

In terms of biological role, binds 16S rRNA, required for the assembly of 30S particles and may also be responsible for determining the conformation of the 16S rRNA at the A site. In Actinobacillus pleuropneumoniae serotype 3 (strain JL03), this protein is Small ribosomal subunit protein uS14.